Consider the following 190-residue polypeptide: UPF0200 protein MTH_434 (190 aa).

10–17 serves as a coordination point for ATP; the sequence is GMPGAGKG.

This sequence belongs to the UPF0200 family.

The sequence is that of UPF0200 protein MTH_434 from Methanothermobacter thermautotrophicus (strain ATCC 29096 / DSM 1053 / JCM 10044 / NBRC 100330 / Delta H) (Methanobacterium thermoautotrophicum).